Here is an 887-residue protein sequence, read N- to C-terminus: Fibroblast growth factor receptor 2 (887 aa).

Residues 1 to 18 (MLNKFIVIVTMLAMWNYA) form the signal peptide. Residues 19–416 (QDCNFELSKN…KDCVGNSYFT (398 aa)) are Extracellular-facing. 2 consecutive Ig-like C2-type domains span residues 22 to 115 (NFEL…EFIS) and 180 to 260 (VSGS…LRMK). Residues Asn28, Asn74, Asn93, Asn230, Asn261, Asn268, Asn328, Asn334, and Asn364 are each glycosylated (N-linked (GlcNAc...) asparagine). Cys43 and Cys104 are disulfide-bonded. Residues 297–387 (FNLNSRVCIN…YACRIINFKD (91 aa)) enclose the Ig-like C2-type 3 domain. Cys313 and Cys380 are disulfide-bonded. The chain crosses the membrane as a helical span at residues 417-437 (IIWYSISVGIIILVVISFLII). Topologically, residues 438-887 (RLYNKYSNGY…SNQCYSTTIV (450 aa)) are cytoplasmic. The Protein kinase domain maps to 585-862 (LIIGSKIGEG…IIDKLTHIQL (278 aa)). ATP is bound by residues 591 to 599 (IGEGAFGIV) and Lys619. The active-site Proton acceptor is Asp728. The residue at position 757 (Tyr757) is a Phosphotyrosine; by autocatalysis.

This sequence belongs to the protein kinase superfamily. Tyr protein kinase family. Fibroblast growth factor receptor subfamily. Expressed in brain, stem cells and the mesenchymal cells.

Its subcellular location is the membrane. The enzyme catalyses L-tyrosyl-[protein] + ATP = O-phospho-L-tyrosyl-[protein] + ADP + H(+). In terms of biological role, receptor for basic fibroblast growth factor. The polypeptide is Fibroblast growth factor receptor 2 (FGFR2) (Dugesia japonica (Planarian)).